The primary structure comprises 259 residues: MNISQKIVSVRGTQIGGEQPCICTPIVGASMEQILSETEEVCRKRPDIIEWRADFFKDIYDPQKVLETALAIRKIAGEIPILFTIRSEKEGGNPVPLTETEKIELFTEVCKSRLVDMIDCELLYEEELASLRQVSKEYGIRMIMSYHNFSSTPPKEELVQKMLQAESYGADIAKVAVMPASPQDLLVLFQATQEARSQLSIPLITMSMGGLGVITRLAGWMFGSAVTFAVGQNSSAPGQIPIEDLKEVLHIVQKHMFHG.

3-dehydroquinate is bound by residues 50-52 and R86; that span reads EWR. Catalysis depends on H147, which acts as the Proton donor/acceptor. K174 functions as the Schiff-base intermediate with substrate in the catalytic mechanism. 3 residues coordinate 3-dehydroquinate: R216, S235, and Q239.

It belongs to the type-I 3-dehydroquinase family. Homodimer.

It catalyses the reaction 3-dehydroquinate = 3-dehydroshikimate + H2O. The protein operates within metabolic intermediate biosynthesis; chorismate biosynthesis; chorismate from D-erythrose 4-phosphate and phosphoenolpyruvate: step 3/7. Involved in the third step of the chorismate pathway, which leads to the biosynthesis of aromatic amino acids. Catalyzes the cis-dehydration of 3-dehydroquinate (DHQ) and introduces the first double bond of the aromatic ring to yield 3-dehydroshikimate. This chain is 3-dehydroquinate dehydratase, found in Geobacillus sp. (strain WCH70).